The primary structure comprises 140 residues: MRHYEIIFLVHPDQSEQVGGMVERYTKLIEEDGGKIHRLEDWGRRQLAYAINNVHKAHYVMLNVECTGKALAELEDNFRYNDAVIRNLVIRRDEAVTGQSEMLKAEENRSERRERRERPENAESNDGDDSDSNDSDNADE.

A disordered region spans residues Val-96–Glu-140. The span at Leu-103–Asn-121 shows a compositional bias: basic and acidic residues. A compositionally biased stretch (acidic residues) spans Glu-123–Glu-140.

Belongs to the bacterial ribosomal protein bS6 family.

Its function is as follows. Binds together with bS18 to 16S ribosomal RNA. In Ectopseudomonas mendocina (strain ymp) (Pseudomonas mendocina), this protein is Small ribosomal subunit protein bS6.